We begin with the raw amino-acid sequence, 41 residues long: Large ribosomal subunit protein bL36 (41 aa).

This sequence belongs to the bacterial ribosomal protein bL36 family.

This is Large ribosomal subunit protein bL36 from Maricaulis maris (strain MCS10) (Caulobacter maris).